Consider the following 437-residue polypeptide: Magnetosome protein MamN (437 aa).

Helical transmembrane passes span 26–46 (LAVL…GTYT), 53–73 (SIYF…ALLA), 95–115 (WILV…NSLI), 136–156 (VPVI…TMIG), 174–194 (FIGG…LFFE), 229–249 (YGLI…PLKV), 252–268 (GWIA…LGRF), 281–301 (DILF…VGIL), 320–340 (AILL…GTSA), 358–378 (AAWW…LSGA), and 416–436 (WGLP…AVLA).

This sequence belongs to the arsenite-antimonite (ArsB) efflux (TC 2.A.45) family.

It is found in the magnetosome membrane. Functionally, plays a role in biomineralization; might regulate pH in the magnetosome. The sequence is that of Magnetosome protein MamN from Magnetospirillum gryphiswaldense (strain DSM 6361 / JCM 21280 / NBRC 15271 / MSR-1).